A 311-amino-acid polypeptide reads, in one-letter code: Small ribosomal subunit biogenesis GTPase RsgA (311 aa).

Residues 88–246 form the CP-type G domain; that stretch reads SKEKEQVIVA…VIDTPGIREF (159 aa). GTP-binding positions include 137–140 and 188–196; these read NKID and GHSGVGKST. Residues Cys270, Cys275, His277, and Cys283 each coordinate Zn(2+).

The protein belongs to the TRAFAC class YlqF/YawG GTPase family. RsgA subfamily. In terms of assembly, monomer. Associates with 30S ribosomal subunit, binds 16S rRNA. It depends on Zn(2+) as a cofactor.

It localises to the cytoplasm. One of several proteins that assist in the late maturation steps of the functional core of the 30S ribosomal subunit. Helps release RbfA from mature subunits. May play a role in the assembly of ribosomal proteins into the subunit. Circularly permuted GTPase that catalyzes slow GTP hydrolysis, GTPase activity is stimulated by the 30S ribosomal subunit. This Chlorobaculum tepidum (strain ATCC 49652 / DSM 12025 / NBRC 103806 / TLS) (Chlorobium tepidum) protein is Small ribosomal subunit biogenesis GTPase RsgA.